The primary structure comprises 302 residues: Ectoine dioxygenase (302 aa).

Gln-128 contacts L-ectoine. Lys-134 provides a ligand contact to 2-oxoglutarate. Fe cation-binding residues include His-145, Asp-147, and His-246.

It belongs to the PhyH family. EctD subfamily. As to quaternary structure, homodimer. It depends on Fe(2+) as a cofactor.

The catalysed reaction is L-ectoine + 2-oxoglutarate + O2 = 5-hydroxyectoine + succinate + CO2. Functionally, involved in the biosynthesis of 5-hydroxyectoine, called compatible solute, which helps organisms to survive extreme osmotic stress by acting as a highly soluble organic osmolyte. Catalyzes the 2-oxoglutarate-dependent selective hydroxylation of L-ectoine to yield (4S,5S)-5-hydroxyectoine. In Stutzerimonas stutzeri (strain A1501) (Pseudomonas stutzeri), this protein is Ectoine dioxygenase.